Reading from the N-terminus, the 325-residue chain is Sel1-repeat-containing protein YbeQ (325 aa).

8 Sel1-like repeats span residues 26–61 (EAQY…EQGH), 63–97 (EAQY…LQGH), 103–130 (ALGW…AESG), 132–167 (SYAQ…LQGH), 168–203 (SDAQ…QQGN), 205–239 (HAQF…AQGS), 242–275 (AYVN…ECND), and 280–305 (YNLA…LYRK).

This sequence to E.coli YbeT.

The protein is Sel1-repeat-containing protein YbeQ (ybeQ) of Escherichia coli (strain K12).